The chain runs to 391 residues: Calcium-binding and spermatid-specific protein 1 (391 aa).

Disordered stretches follow at residues Met1 to Glu23, Pro90 to Thr110, and Lys152 to Thr221. Residues Pro90–Pro101 show a composition bias toward low complexity. Phosphoserine is present on residues Ser253 and Ser269. Residues Glu271–Ala299 form a disordered region. Acidic residues predominate over residues Glu278–Thr287. Ser314, Ser347, Ser357, Ser372, and Ser376 each carry phosphoserine. Positions Glu330–Val351 are disordered.

Detected only in testis. Expressed from stages X to VIII of the seminiferous epithelial cycle. Expressed from step 13 to step 16 of spermatid development (at protein level).

Its subcellular location is the cytoplasm. The protein localises to the mitochondrion inner membrane. The protein resides in the cell projection. It is found in the cilium. It localises to the flagellum. Its subcellular location is the cytoplasmic vesicle. The protein localises to the secretory vesicle. The protein resides in the acrosome. Calcium-binding protein. Essential for maintaining the structural integrity of the sperm flagella. This Mus musculus (Mouse) protein is Calcium-binding and spermatid-specific protein 1 (Cabs1).